The following is a 287-amino-acid chain: Elongation factor Ts (287 aa).

Positions 79-82 are involved in Mg(2+) ion dislocation from EF-Tu; sequence TDFV.

Belongs to the EF-Ts family.

It localises to the cytoplasm. Associates with the EF-Tu.GDP complex and induces the exchange of GDP to GTP. It remains bound to the aminoacyl-tRNA.EF-Tu.GTP complex up to the GTP hydrolysis stage on the ribosome. This is Elongation factor Ts from Anaplasma phagocytophilum (strain HZ).